A 135-amino-acid polypeptide reads, in one-letter code: Protein NrdI (135 aa).

The protein belongs to the NrdI family.

Probably involved in ribonucleotide reductase function. This chain is Protein NrdI, found in Salmonella gallinarum (strain 287/91 / NCTC 13346).